We begin with the raw amino-acid sequence, 478 residues long: Catalase (478 aa).

The tract at residues M1–G23 is disordered. Residues H53 and N126 contribute to the active site. Y336 is a heme binding site.

It belongs to the catalase family. Heme serves as cofactor.

It is found in the cytoplasm. It carries out the reaction 2 H2O2 = O2 + 2 H2O. In terms of biological role, decomposes hydrogen peroxide into water and oxygen; serves to protect cells from the toxic effects of hydrogen peroxide. In Latilactobacillus sakei (Lactobacillus sakei), this protein is Catalase (katA).